Consider the following 280-residue polypeptide: F420-dependent methylenetetrahydromethanopterin dehydrogenase (280 aa).

This sequence belongs to the MTD family.

It carries out the reaction 5,10-methylenetetrahydromethanopterin + oxidized coenzyme F420-(gamma-L-Glu)(n) + 2 H(+) = 5,10-methenyl-5,6,7,8-tetrahydromethanopterin + reduced coenzyme F420-(gamma-L-Glu)(n). The protein operates within one-carbon metabolism; methanogenesis from CO(2); 5,10-methylene-5,6,7,8-tetrahydromethanopterin from 5,10-methenyl-5,6,7,8-tetrahydromethanopterin (coenzyme F420 route): step 1/1. Catalyzes the reversible reduction of methenyl-H(4)MPT(+) to methylene-H(4)MPT. The sequence is that of F420-dependent methylenetetrahydromethanopterin dehydrogenase from Methanosphaerula palustris (strain ATCC BAA-1556 / DSM 19958 / E1-9c).